Reading from the N-terminus, the 110-residue chain is Class I hydrophobin 2 (110 aa).

A signal peptide spans 1 to 19 (MFARAASVFVLSLPILATA). Disulfide bonds link Cys29–Cys89, Cys36–Cys83, Cys37–Cys70, and Cys90–Cys103.

Belongs to the fungal hydrophobin family. In terms of assembly, self-assembles to form functional amyloid fibrils called rodlets. Self-assembly into fibrillar rodlets occurs spontaneously at hydrophobic:hydrophilic interfaces and the rodlets further associate laterally to form amphipathic monolayers.

It localises to the secreted. The protein localises to the cell wall. Its function is as follows. Aerial growth, conidiation, and dispersal of filamentous fungi in the environment rely upon a capability of their secreting small amphipathic proteins called hydrophobins (HPBs) with low sequence identity. Class I can self-assemble into an outermost layer of rodlet bundles on aerial cell surfaces, conferring cellular hydrophobicity that supports fungal growth, development and dispersal; whereas Class II form highly ordered films at water-air interfaces through intermolecular interactions but contribute nothing to the rodlet structure. Pnh2 is a class I hydrophobin that might be involved in the attachment of the hydrophilic wall of hyphae to the hydrophobic surface of wood under inorganic phosphate (Pi)-deficient conditions and enable the mycelium to degrade efficiently the components of wood and to acquire nutrients containing Pi. This Pholiota nameko protein is Class I hydrophobin 2.